The chain runs to 635 residues: 1-deoxy-D-xylulose-5-phosphate synthase (635 aa).

Thiamine diphosphate-binding positions include His79 and 120-122; that span reads GHS. Asp151 provides a ligand contact to Mg(2+). Thiamine diphosphate contacts are provided by residues 152–153, Asn182, Tyr290, and Glu372; that span reads GA. Asn182 is a Mg(2+) binding site.

This sequence belongs to the transketolase family. DXPS subfamily. In terms of assembly, homodimer. Mg(2+) serves as cofactor. The cofactor is thiamine diphosphate.

The catalysed reaction is D-glyceraldehyde 3-phosphate + pyruvate + H(+) = 1-deoxy-D-xylulose 5-phosphate + CO2. The protein operates within metabolic intermediate biosynthesis; 1-deoxy-D-xylulose 5-phosphate biosynthesis; 1-deoxy-D-xylulose 5-phosphate from D-glyceraldehyde 3-phosphate and pyruvate: step 1/1. Catalyzes the acyloin condensation reaction between C atoms 2 and 3 of pyruvate and glyceraldehyde 3-phosphate to yield 1-deoxy-D-xylulose-5-phosphate (DXP). The chain is 1-deoxy-D-xylulose-5-phosphate synthase from Stenotrophomonas maltophilia (strain K279a).